Here is a 646-residue protein sequence, read N- to C-terminus: Threonine--tRNA ligase (646 aa).

The TGS domain maps to 1–61; that stretch reads MIKITFPDGS…NEDADFVLYK (61 aa). The segment at 242 to 541 is catalytic; sequence DHRKIGKEMQ…LIEHTAGKFP (300 aa). Residues Cys-337, His-388, and His-518 each contribute to the Zn(2+) site.

It belongs to the class-II aminoacyl-tRNA synthetase family. As to quaternary structure, homodimer. Zn(2+) is required as a cofactor.

The protein resides in the cytoplasm. It carries out the reaction tRNA(Thr) + L-threonine + ATP = L-threonyl-tRNA(Thr) + AMP + diphosphate + H(+). Catalyzes the attachment of threonine to tRNA(Thr) in a two-step reaction: L-threonine is first activated by ATP to form Thr-AMP and then transferred to the acceptor end of tRNA(Thr). Also edits incorrectly charged L-seryl-tRNA(Thr). This is Threonine--tRNA ligase from Bacteroides thetaiotaomicron (strain ATCC 29148 / DSM 2079 / JCM 5827 / CCUG 10774 / NCTC 10582 / VPI-5482 / E50).